A 263-amino-acid chain; its full sequence is Glutamate/glutamine/aspartate/asparagine transport ATP-binding protein BztD (263 aa).

The ABC transporter domain occupies 23-257 (IQISQMNKWY…PQSERTKQFL (235 aa)). 55–62 (GPSGSGKS) provides a ligand contact to ATP.

The protein belongs to the ABC transporter superfamily. As to quaternary structure, bztB and BztC form a heterodimer which can form a membrane complex with a homodimer of BztD.

The protein resides in the cell membrane. Its function is as follows. Part of a binding-protein-dependent transport system for glutamate, glutamine, aspartate, asparagine. Probably responsible for energy coupling to the transport system. The sequence is that of Glutamate/glutamine/aspartate/asparagine transport ATP-binding protein BztD (bztD) from Rhodobacter capsulatus (strain ATCC BAA-309 / NBRC 16581 / SB1003).